The primary structure comprises 151 residues: MESPIKFEEVDIATILKTLPHRYPFLLIDRVINIRADHSGIGVKNVTINEPAFQGHFPERPVYPGVLMIEGMAQTAGVIGITSVEGTEKPRAVYFLTIDKCKFRKPVMPGDIVEYHMRSIGRRKTMWWFHGDAKVNGATVAEADVGAMLTD.

His-56 is a catalytic residue.

It belongs to the thioester dehydratase family. FabZ subfamily.

It localises to the cytoplasm. The catalysed reaction is a (3R)-hydroxyacyl-[ACP] = a (2E)-enoyl-[ACP] + H2O. In terms of biological role, involved in unsaturated fatty acids biosynthesis. Catalyzes the dehydration of short chain beta-hydroxyacyl-ACPs and long chain saturated and unsaturated beta-hydroxyacyl-ACPs. The polypeptide is 3-hydroxyacyl-[acyl-carrier-protein] dehydratase FabZ (Nitrobacter hamburgensis (strain DSM 10229 / NCIMB 13809 / X14)).